A 377-amino-acid chain; its full sequence is Ribosomal RNA large subunit methyltransferase G (377 aa).

The protein belongs to the methyltransferase superfamily. RlmG family.

It is found in the cytoplasm. It catalyses the reaction guanosine(1835) in 23S rRNA + S-adenosyl-L-methionine = N(2)-methylguanosine(1835) in 23S rRNA + S-adenosyl-L-homocysteine + H(+). Specifically methylates the guanine in position 1835 (m2G1835) of 23S rRNA. In Shewanella sp. (strain MR-4), this protein is Ribosomal RNA large subunit methyltransferase G.